The sequence spans 219 residues: Probable GTP-binding protein EngB (219 aa).

The EngB-type G domain maps to 24-207 (VQPEIAFAGR…HALIESWLRP (184 aa)). GTP is bound by residues 32–39 (GRSNAGKS), 59–63 (GRTQH), 81–84 (DLPG), 148–151 (TKCD), and 185–188 (LFSA). Mg(2+)-binding residues include Ser39 and Thr61.

This sequence belongs to the TRAFAC class TrmE-Era-EngA-EngB-Septin-like GTPase superfamily. EngB GTPase family. Requires Mg(2+) as cofactor.

Functionally, necessary for normal cell division and for the maintenance of normal septation. This is Probable GTP-binding protein EngB from Burkholderia thailandensis (strain ATCC 700388 / DSM 13276 / CCUG 48851 / CIP 106301 / E264).